Here is an 85-residue protein sequence, read N- to C-terminus: U4-theraphotoxin-Hhn1a (85 aa).

The first 22 residues, 1 to 22 (MKVTLIAILTCAAVLVLHTTAA), serve as a signal peptide directing secretion. Positions 23-48 (EELEAESQLMEVGMPDTELEAVDEER) are excised as a propeptide. Intrachain disulfides connect cysteine 52/cysteine 66, cysteine 56/cysteine 77, and cysteine 71/cysteine 82.

This sequence belongs to the neurotoxin 12 (Hwtx-2) family. 02 (Hwtx-2) subfamily. Monomer. Expressed by the venom gland.

The protein resides in the secreted. Neurotoxin active on both insects and mammals. This Cyriopagopus hainanus (Chinese bird spider) protein is U4-theraphotoxin-Hhn1a.